Consider the following 586-residue polypeptide: Phosphatidylinositol-3-phosphatase SAC1-B (586 aa).

The Cytoplasmic segment spans residues 1 to 519 (MASTYNSFNL…TPLHEPKDWK (519 aa)). The SAC domain occupies 121–450 (LNSVLNTDGF…ANACAKQYAG (330 aa)). Residues 451–586 (TGALKTDFTR…PRLVQKEKMD (136 aa)) are essential for phosphatidylinositol-4-phosphate phosphatase activity. The chain crosses the membrane as a helical span at residues 520-540 (FLTLPIIMVVAFSMCIICLLM). The Lumenal portion of the chain corresponds to 541–547 (AGDTWTE). The helical transmembrane segment at 548–568 (TLAYVLFWGSASVVTGGVILF) threads the bilayer. The Cytoplasmic portion of the chain corresponds to 569-586 (NGRDFVDAPRLVQKEKMD).

It localises to the endoplasmic reticulum membrane. It is found in the golgi apparatus membrane. It catalyses the reaction a 1,2-diacyl-sn-glycero-3-phospho-(1D-myo-inositol-3-phosphate) + H2O = a 1,2-diacyl-sn-glycero-3-phospho-(1D-myo-inositol) + phosphate. The enzyme catalyses a 1,2-diacyl-sn-glycero-3-phospho-(1D-myo-inositol 4-phosphate) + H2O = a 1,2-diacyl-sn-glycero-3-phospho-(1D-myo-inositol) + phosphate. Its function is as follows. Phosphoinositide phosphatase which catalyzes the hydrolysis of phosphatidylinositol 4-phosphate (PtdIns(4)P), phosphatidylinositol 3-phosphate (PtdIns(3)P) and has low activity towards phosphatidylinositol-3,5-bisphosphate (PtdIns(3,5)P2). The protein is Phosphatidylinositol-3-phosphatase SAC1-B (sacm1lb) of Danio rerio (Zebrafish).